Reading from the N-terminus, the 179-residue chain is MIKKEEVYKIGLFNKPHGIHGELQFTFTDDIFDRVDCDYLICLLDGIFVPFFIEEYRFRSDSTALVKLEGIDTAERARMFTNVEVYFPVKHAEEAEDGELSWNFFVGFRMEDVRHGELGEVVEVDTATVNTLFVVEQEDGEELLVPAQEEFIVEINQEKKLITVELPEGLLNLEDLEED.

Positions 97-170 (DGELSWNFFV…LITVELPEGL (74 aa)) constitute a PRC barrel domain.

It belongs to the RimM family. Binds ribosomal protein uS19.

The protein resides in the cytoplasm. Its function is as follows. An accessory protein needed during the final step in the assembly of 30S ribosomal subunit, possibly for assembly of the head region. Essential for efficient processing of 16S rRNA. May be needed both before and after RbfA during the maturation of 16S rRNA. It has affinity for free ribosomal 30S subunits but not for 70S ribosomes. In Bacteroides thetaiotaomicron (strain ATCC 29148 / DSM 2079 / JCM 5827 / CCUG 10774 / NCTC 10582 / VPI-5482 / E50), this protein is Ribosome maturation factor RimM.